The following is a 354-amino-acid chain: Ornithine transcarbamylase, mitochondrial (354 aa).

The N-terminal 32 residues, 1-32 (MLSNLRILLNKAALRKAHTSMVRNFRYGKPVQ), are a transit peptide targeting the mitochondrion. Residue Lys70 is modified to N6-acetyllysine; alternate. An N6-succinyllysine; alternate modification is found at Lys70. Residue Lys80 is modified to N6-succinyllysine. Lys88 is subject to N6-acetyllysine; alternate. Lys88 carries the N6-succinyllysine; alternate modification. Carbamoyl phosphate is bound at residue 90-93 (STRT). Position 133 is a phosphoserine (Ser133). Arg141 lines the carbamoyl phosphate pocket. Residue Lys144 is modified to N6-acetyllysine; alternate. An N6-succinyllysine; alternate modification is found at Lys144. Positions 168 and 171 each coordinate carbamoyl phosphate. Position 199 (Asn199) interacts with L-ornithine. 3 positions are modified to N6-acetyllysine; alternate: Lys221, Lys231, and Lys238. N6-succinyllysine; alternate occurs at positions 221, 231, and 238. Asp263, Ser267, and Met268 together coordinate L-ornithine. N6-succinyllysine is present on residues Lys274 and Lys289. N6-acetyllysine; alternate is present on Lys292. At Lys292 the chain carries N6-succinyllysine; alternate. The active-site Proton acceptor is the Cys303. Position 303 to 304 (303 to 304 (CL)) interacts with carbamoyl phosphate. Position 307 is an N6-acetyllysine; alternate (Lys307). Residue Lys307 is modified to N6-succinyllysine; alternate. Arg330 contacts carbamoyl phosphate.

It belongs to the aspartate/ornithine carbamoyltransferase superfamily. OTCase family. Homotrimer. In terms of processing, acetylation at Lys-88 negatively regulates ornithine carbamoyltransferase activity in response to nutrient signals.

It localises to the mitochondrion matrix. It carries out the reaction carbamoyl phosphate + L-ornithine = L-citrulline + phosphate + H(+). It functions in the pathway nitrogen metabolism; urea cycle; L-citrulline from L-ornithine and carbamoyl phosphate: step 1/1. With respect to regulation, negatively regulated by lysine acetylation. Catalyzes the second step of the urea cycle, the condensation of carbamoyl phosphate with L-ornithine to form L-citrulline. The urea cycle ensures the detoxification of ammonia by converting it to urea for excretion. This chain is Ornithine transcarbamylase, mitochondrial, found in Rattus norvegicus (Rat).